A 498-amino-acid chain; its full sequence is Calcitonin receptor (498 aa).

The signal sequence occupies residues 1-29; the sequence is MRFTLTRWCLTLFIFLNRPLPVLPDSADG. Residues 30–147 lie on the Extracellular side of the membrane; the sequence is AHTPTLEPEP…FTPDKLQNAY (118 aa). 3 disulfide bridges follow: Cys56–Cys82, Cys73–Cys113, and Cys96–Cys135. 3 N-linked (GlcNAc...) asparagine glycosylation sites follow: Asn74, Asn126, and Asn131. A helical membrane pass occupies residues 148–170; it reads ILYYLAIVGHSLSILTLLISLGI. Over 171 to 198 the chain is Cytoplasmic; the sequence is FMFLRYFNLLAPFNALLYPTRSISCQRV. Residues 199–219 traverse the membrane as a helical segment; that stretch reads TLHKNMFLTYVLNSIIIIVHL. Topologically, residues 220-236 are extracellular; that stretch reads VVIVPNGELVKRDPPIC. A disulfide bridge links Cys236 with Cys306. A helical transmembrane segment spans residues 237–259; that stretch reads KVLHFFHQYMMSCNYFWMLCEGV. The Cytoplasmic portion of the chain corresponds to 260-276; the sequence is YLHTLIVVSVFAEGQRL. A helical membrane pass occupies residues 277–297; that stretch reads WWYHVLGWGFPLIPTTAHAIT. Topologically, residues 298 to 313 are extracellular; sequence RAVLFNDNCWLSVDTN. Residues 314 to 337 form a helical membrane-spanning segment; it reads LLYIIHGPVMAALVVNFFFLLNIL. Residues 338–357 lie on the Cytoplasmic side of the membrane; the sequence is RVLVKKLKESQEAESHMYLK. A helical membrane pass occupies residues 358 to 376; the sequence is AVRATLILVPLLGVQFVVL. The Extracellular portion of the chain corresponds to 377 to 384; it reads PWRPSTPL. Residues 385–411 form a helical membrane-spanning segment; sequence LGKIYDYVVHSLIHFQGFFVAIIYCFC. At 412-498 the chain is on the cytoplasmic side; it reads NHEVQGALKR…MEVLEQETSA (87 aa).

Belongs to the G-protein coupled receptor 2 family. As to quaternary structure, heterodimer of CALCR and RAMP1, RAMP2 or RAMP3; the receptor complexes function as AMYR1, AMYR2 and AMYR3 receptors, respectively, and respond to amylin/IAPP, calcitonin/CT and CGRP1 ligands. Interacts with GPRASP2.

The protein resides in the cell membrane. In terms of biological role, g protein-coupled receptor activated by ligand peptides amylin (IAPP), calcitonin (CT/CALCA) and calcitonin gene-related peptide type 1 (CGRP1/CALCA). CALCR interacts with receptor-activity-modifying proteins RAMP1, 2 and 3 to form receptor complexes AMYR1, 2 and 3, respectively. IAPP, CT and CGRP1 activate CALCR and AMYRs with distinct modes of receptor activation resulting in specific phenotypes. Ligand binding causes a conformation change that triggers signaling via guanine nucleotide-binding proteins (G proteins) and modulates the activity of downstream effectors. Activates cAMP-dependent pathway. The polypeptide is Calcitonin receptor (Sus scrofa (Pig)).